We begin with the raw amino-acid sequence, 478 residues long: Zinc metalloproteinase/disintegrin (478 aa).

The first 20 residues, 1–20, serve as a signal peptide directing secretion; the sequence is MIQVLLVTICLAAFPYQGSS. Residues 21–188 constitute a propeptide that is removed on maturation; it reads IILESGNVND…PIKKVSQLNL (168 aa). One can recognise a Peptidase M12B domain in the interval 194-391; it reads RHVDIVVVVD…QNPQCILNKP (198 aa). An intrachain disulfide couples C207 to C248. A glycan (N-linked (GlcNAc...) (complex) asparagine) is linked at N279. Cystine bridges form between C305–C386, C345–C370, and C347–C353. H330 serves as a coordination point for Zn(2+). E331 is an active-site residue. H334 and H340 together coordinate Zn(2+). Residue N369 is glycosylated (N-linked (GlcNAc...) (complex) asparagine). The propeptide occupies 392-407; the sequence is LRTVSIPVSGNEHLEA. Positions 397-478 constitute a Disintegrin domain; sequence IPVSGNEHLE…ADCPRYHSHA (82 aa). 6 disulfide bridges follow: C411–C426, C413–C421, C420–C443, C434–C440, C439–C464, and C452–C471. The short motif at 456–458 is the Cell attachment site element; that stretch reads RGD. A propeptide spanning residues 476 to 478 is cleaved from the precursor; it reads SHA.

This sequence belongs to the venom metalloproteinase (M12B) family. P-II subfamily. P-IIa sub-subfamily. Monomeric (disintegrin). Zn(2+) is required as a cofactor. In terms of processing, glycans are composed of 4 GlcNAc, 3 Man, 2 Gal, 2 NeuAC and 1 Fuc residue. As to expression, expressed by the venom gland.

It is found in the secreted. In terms of biological role, impairs hemostasis in the envenomed animal. Functionally, inhibits platelet aggregation induced by ADP, thrombin, platelet-activating factor and collagen. Acts by inhibiting fibrinogen interaction with platelet receptors alpha-IIb/beta-3 (ITGA2B/ITGB3). The chain is Zinc metalloproteinase/disintegrin from Calloselasma rhodostoma (Malayan pit viper).